The following is an 89-amino-acid chain: Small ribosomal subunit protein uS17A (89 aa).

It belongs to the universal ribosomal protein uS17 family. As to quaternary structure, part of the 30S ribosomal subunit.

Its function is as follows. One of the primary rRNA binding proteins, it binds specifically to the 5'-end of 16S ribosomal RNA. In Bacteroides thetaiotaomicron (strain ATCC 29148 / DSM 2079 / JCM 5827 / CCUG 10774 / NCTC 10582 / VPI-5482 / E50), this protein is Small ribosomal subunit protein uS17A.